We begin with the raw amino-acid sequence, 117 residues long: NADH-ubiquinone oxidoreductase chain 3 (117 aa).

The next 3 membrane-spanning stretches (helical) occupy residues 5-25 (ALSS…AWVL), 57-77 (FFLL…LMPL), and 86-106 (VFTT…GLIH).

Belongs to the complex I subunit 3 family.

It localises to the mitochondrion membrane. The catalysed reaction is a ubiquinone + NADH + 5 H(+)(in) = a ubiquinol + NAD(+) + 4 H(+)(out). Core subunit of the mitochondrial membrane respiratory chain NADH dehydrogenase (Complex I) that is believed to belong to the minimal assembly required for catalysis. Complex I functions in the transfer of electrons from NADH to the respiratory chain. The immediate electron acceptor for the enzyme is believed to be ubiquinone. This is NADH-ubiquinone oxidoreductase chain 3 (ND3) from Lumbricus terrestris (Common earthworm).